The primary structure comprises 98 residues: Large ribosomal subunit protein bL28 (98 aa).

It belongs to the bacterial ribosomal protein bL28 family.

This chain is Large ribosomal subunit protein bL28, found in Chelativorans sp. (strain BNC1).